A 130-amino-acid polypeptide reads, in one-letter code: Small ribosomal subunit protein uS11c (130 aa).

The protein belongs to the universal ribosomal protein uS11 family. Part of the 30S ribosomal subunit.

Its subcellular location is the plastid. It localises to the chloroplast. This chain is Small ribosomal subunit protein uS11c, found in Physcomitrium patens (Spreading-leaved earth moss).